Consider the following 175-residue polypeptide: Ribosome maturation factor RimM (175 aa).

The PRC barrel domain occupies 95 to 175 (SEDEFYWREL…RIEVDWDPGF (81 aa)).

The protein belongs to the RimM family. Binds ribosomal protein uS19.

The protein localises to the cytoplasm. In terms of biological role, an accessory protein needed during the final step in the assembly of 30S ribosomal subunit, possibly for assembly of the head region. Essential for efficient processing of 16S rRNA. May be needed both before and after RbfA during the maturation of 16S rRNA. It has affinity for free ribosomal 30S subunits but not for 70S ribosomes. The sequence is that of Ribosome maturation factor RimM from Aliivibrio fischeri (strain MJ11) (Vibrio fischeri).